The following is a 241-amino-acid chain: Uridylate kinase (241 aa).

15-18 (KLSG) contacts ATP. An involved in allosteric activation by GTP region spans residues 23–28 (GTEGFG). A UMP-binding site is contributed by Gly-57. Residues Gly-58 and Arg-62 each coordinate ATP. Residues Asp-77 and 138-145 (TGNPFFTT) contribute to the UMP site. Residues Thr-165, Tyr-171, and Asp-174 each contribute to the ATP site.

This sequence belongs to the UMP kinase family. As to quaternary structure, homohexamer.

Its subcellular location is the cytoplasm. It carries out the reaction UMP + ATP = UDP + ADP. It participates in pyrimidine metabolism; CTP biosynthesis via de novo pathway; UDP from UMP (UMPK route): step 1/1. With respect to regulation, allosterically activated by GTP. Inhibited by UTP. Functionally, catalyzes the reversible phosphorylation of UMP to UDP. The protein is Uridylate kinase of Pectobacterium atrosepticum (strain SCRI 1043 / ATCC BAA-672) (Erwinia carotovora subsp. atroseptica).